The sequence spans 134 residues: Small ribosomal subunit protein uS11 (134 aa).

It belongs to the universal ribosomal protein uS11 family. In terms of assembly, part of the 30S ribosomal subunit. Interacts with proteins S7 and S18. Binds to IF-3.

Its function is as follows. Located on the platform of the 30S subunit, it bridges several disparate RNA helices of the 16S rRNA. Forms part of the Shine-Dalgarno cleft in the 70S ribosome. This Janthinobacterium sp. (strain Marseille) (Minibacterium massiliensis) protein is Small ribosomal subunit protein uS11.